The primary structure comprises 189 residues: Ion-translocating oxidoreductase complex subunit B (189 aa).

The tract at residues 1-26 (MSAIVIAIVVLTILALVFGVLLGFAA) is hydrophobic. Positions 32–90 (EGNPLTDQIEALLPQTQCGQCGYPGCRPYAEAIANGDKVNKCPPGGAATMEKLADLMGV) constitute a 4Fe-4S domain. The [4Fe-4S] cluster site is built by cysteine 49, cysteine 52, cysteine 57, cysteine 73, cysteine 114, cysteine 117, cysteine 120, cysteine 124, cysteine 144, cysteine 147, cysteine 150, and cysteine 154. 4Fe-4S ferredoxin-type domains lie at 105-134 (KVAY…GSGK) and 135-164 (LMHT…MLPV).

This sequence belongs to the 4Fe4S bacterial-type ferredoxin family. RnfB subfamily. As to quaternary structure, the complex is composed of six subunits: RnfA, RnfB, RnfC, RnfD, RnfE and RnfG. [4Fe-4S] cluster is required as a cofactor.

The protein resides in the cell inner membrane. Functionally, part of a membrane-bound complex that couples electron transfer with translocation of ions across the membrane. The sequence is that of Ion-translocating oxidoreductase complex subunit B from Shewanella pealeana (strain ATCC 700345 / ANG-SQ1).